The sequence spans 648 residues: Serine/threonine-protein kinase DCLK3 (648 aa).

Disordered stretches follow at residues 86–127 (DDRA…HLGV) and 150–345 (QSLE…PRPM). 5 stretches are compositionally biased toward basic and acidic residues: residues 98-127 (GKWE…HLGV), 213-234 (ELRR…DQES), 255-266 (EGLREVKKDTRP), 277-303 (LREH…EKKP), and 312-338 (TLRD…ERPS). One can recognise a Protein kinase domain in the interval 356–613 (YETGRVIGDG…AHQVLQHPWI (258 aa)). ATP-binding positions include 362 to 370 (IGDGNFAVV) and K385. The active-site Proton acceptor is the D477. Positions 628–648 (VSPSSEGHFRSQHKRVVEQVS) are disordered.

It belongs to the protein kinase superfamily. CAMK Ser/Thr protein kinase family. CaMK subfamily.

Its subcellular location is the cytoplasm. It localises to the nucleus. The catalysed reaction is L-seryl-[protein] + ATP = O-phospho-L-seryl-[protein] + ADP + H(+). It catalyses the reaction L-threonyl-[protein] + ATP = O-phospho-L-threonyl-[protein] + ADP + H(+). The chain is Serine/threonine-protein kinase DCLK3 (DCLK3) from Homo sapiens (Human).